The sequence spans 466 residues: Trigger factor (466 aa).

The 82-residue stretch at 162 to 243 folds into the PPIase FKBP-type domain; that stretch reads GDVVSIDLSA…VRSVKERELP (82 aa). The disordered stretch occupies residues 428–466; it reads GNTIDTSEFFGKRVSAGEAEEAEPADEGAARAASDEATT. Over residues 457–466 the composition is skewed to low complexity; the sequence is ARAASDEATT.

This sequence belongs to the FKBP-type PPIase family. Tig subfamily.

Its subcellular location is the cytoplasm. It catalyses the reaction [protein]-peptidylproline (omega=180) = [protein]-peptidylproline (omega=0). Involved in protein export. Acts as a chaperone by maintaining the newly synthesized protein in an open conformation. Functions as a peptidyl-prolyl cis-trans isomerase. The sequence is that of Trigger factor from Mycobacterium bovis (strain BCG / Tokyo 172 / ATCC 35737 / TMC 1019).